Consider the following 215-residue polypeptide: Probable septum site-determining protein MinC (215 aa).

Belongs to the MinC family. As to quaternary structure, interacts with MinD and FtsZ.

In terms of biological role, cell division inhibitor that blocks the formation of polar Z ring septums. Rapidly oscillates between the poles of the cell to destabilize FtsZ filaments that have formed before they mature into polar Z rings. Prevents FtsZ polymerization. The sequence is that of Probable septum site-determining protein MinC from Clostridium botulinum (strain Alaska E43 / Type E3).